We begin with the raw amino-acid sequence, 260 residues long: NAD-capped RNA hydrolase NudC (260 aa).

Substrate-binding residues include Lys-25 and Arg-69. Residues Cys-98 and Cys-101 each coordinate Zn(2+). Substrate is bound at residue Glu-111. Residues Cys-116 and Cys-119 each coordinate Zn(2+). Tyr-124 provides a ligand contact to substrate. A Nudix hydrolase domain is found at 125 to 248; sequence PQIAPCVIVA…TVARRLIEDT (124 aa). A divalent metal cation is bound by residues Ala-158, Glu-174, and Glu-178. The Nudix box signature appears at 159–180; sequence GFVEVGETLEQAVSREVLEESN. 192–199 contacts substrate; sequence QPWPFPHS. Residue Glu-219 participates in a divalent metal cation binding. Ala-241 contacts substrate.

It belongs to the Nudix hydrolase family. NudC subfamily. Homodimer. Requires Mg(2+) as cofactor. It depends on Mn(2+) as a cofactor. Zn(2+) serves as cofactor.

The catalysed reaction is a 5'-end NAD(+)-phospho-ribonucleoside in mRNA + H2O = a 5'-end phospho-adenosine-phospho-ribonucleoside in mRNA + beta-nicotinamide D-ribonucleotide + 2 H(+). The enzyme catalyses NAD(+) + H2O = beta-nicotinamide D-ribonucleotide + AMP + 2 H(+). It catalyses the reaction NADH + H2O = reduced beta-nicotinamide D-ribonucleotide + AMP + 2 H(+). In terms of biological role, mRNA decapping enzyme that specifically removes the nicotinamide adenine dinucleotide (NAD) cap from a subset of mRNAs by hydrolyzing the diphosphate linkage to produce nicotinamide mononucleotide (NMN) and 5' monophosphate mRNA. The NAD-cap is present at the 5'-end of some mRNAs and stabilizes RNA against 5'-processing. Has preference for mRNAs with a 5'-end purine. Catalyzes the hydrolysis of a broad range of dinucleotide pyrophosphates. This is NAD-capped RNA hydrolase NudC from Yersinia pestis bv. Antiqua (strain Antiqua).